Consider the following 579-residue polypeptide: MESPIFILITLSFFLQSVLASSQTLSNSSTICKTTPDPKYCKSVFPHSQGNVQQYGCFSIRKSLSQSRKFIRTVDRYIKRNAHLSQPAVIRALQDCRFLAGLTMDYLLTSFETVNDTSAKTSFKPLSFPKADDIQTLLSAALTNEQTCLEGLTTAASYSATWTVRTGVALPLVNDTKLLGVSLALFTKGWVPKKKKRAGFAWAQPRSGSSTHTKPFRLFRNGALPLKMTEKTKAVYESLSRRKLADGDSNGDGDDGSMVLISDIVTVSQDGTGNFTNITAAVAAAPNNTDGSAGFFLIYVTAGIYEEYISIAKNKRYMMMIGDGINQTVVTGNRSVVDGWTTFNSATFAVTAPNFVAVNITFRNTAGPEKHQAVALRSGADFSIFYSCSFEAYQDTLYTHSLRQFYRECDVYGTVDFIFGNAAVVFQNCNLYPRKPMPNQFNAITAQGRSDPNQNTGTSIQNCTIKPADDLVSSNYTVKTYLGRPWKEYSRTVYMQSYIDGFVEPVGWREWNGDFALSTLYYAEYNNTGPGSNTTNRVTWPGYHVINSTDAANFTVTGLFIEADWIWKTGVPYTSGLIS.

Positions 1–20 (MESPIFILITLSFFLQSVLA) are cleaved as a signal peptide. The segment at 22–185 (SQTLSNSSTI…TKLLGVSLAL (164 aa)) is pectinesterase inhibitor 7. N-linked (GlcNAc...) asparagine glycans are attached at residues Asn27, Asn115, Asn174, Asn274, Asn277, Asn287, Asn326, and Asn333. The pectinesterase 7 stretch occupies residues 265 to 564 (VTVSQDGTGN…TVTGLFIEAD (300 aa)). Thr342 contacts substrate. The N-linked (GlcNAc...) asparagine glycan is linked to Asn359. Gln372 is a substrate binding site. Asp395 serves as the catalytic Proton donor; for pectinesterase activity. Cys409 and Cys429 form a disulfide bridge. The active-site Nucleophile; for pectinesterase activity is the Asp416. 2 N-linked (GlcNAc...) asparagine glycosylation sites follow: Asn462 and Asn475. The substrate site is built by Arg484 and Trp486. Asn526, Asn533, Asn547, and Asn553 each carry an N-linked (GlcNAc...) asparagine glycan.

It in the N-terminal section; belongs to the PMEI family. In the C-terminal section; belongs to the pectinesterase family. As to expression, expressed in siliques.

It is found in the secreted. Its subcellular location is the cell wall. The enzyme catalyses [(1-&gt;4)-alpha-D-galacturonosyl methyl ester](n) + n H2O = [(1-&gt;4)-alpha-D-galacturonosyl](n) + n methanol + n H(+). It participates in glycan metabolism; pectin degradation; 2-dehydro-3-deoxy-D-gluconate from pectin: step 1/5. Acts in the modification of cell walls via demethylesterification of cell wall pectin. The polypeptide is Probable pectinesterase/pectinesterase inhibitor 7 (PME7) (Arabidopsis thaliana (Mouse-ear cress)).